Reading from the N-terminus, the 183-residue chain is Capsid protein (183 aa).

Residues 136–183 form a disordered region; sequence NAPILSTLPETTVVRRRGRSPRRRTPSPRRRRSQSPRRRRSKSRESQC. A compositionally biased stretch (basic residues) spans 149-177; sequence VRRRGRSPRRRTPSPRRRRSQSPRRRRSK. Residues serine 155, serine 162, and serine 170 each carry the phosphoserine; by host modification. One copy of the 1; half-length repeat lies at 155-160; the sequence is SPRRRT. Residues 155 to 176 form a 3 X 7 AA repeats of S-P-R-R-R-[PR]-S region; that stretch reads SPRRRTPSPRRRRSQSPRRRRS. Residues 158–175 carry the Bipartite nuclear localization signal motif; it reads RRTPSPRRRRSQSPRRRR. 2 repeat units span residues 162-168 and 170-176. Residues 177 to 183 form an RNA binding region; that stretch reads KSRESQC.

This sequence belongs to the orthohepadnavirus core antigen family. Homodimerizes, then multimerizes. Interacts with cytosol exposed regions of viral L glycoprotein present in the reticulum-to-Golgi compartment. Interacts with human FLNB. Phosphorylated form interacts with host importin alpha; this interaction depends on the exposure of the NLS, which itself depends upon genome maturation and/or phosphorylation of the capsid protein. Interacts with host NUP153. Post-translationally, phosphorylated by host SRPK1, SRPK2, and maybe protein kinase C or GAPDH. Phosphorylation is critical for pregenomic RNA packaging. Protein kinase C phosphorylation is stimulated by HBx protein and may play a role in transport of the viral genome to the nucleus at the late step during the viral replication cycle.

It is found in the virion. The protein resides in the host cytoplasm. In terms of biological role, self assembles to form an icosahedral capsid. Most capsids appear to be large particles with an icosahedral symmetry of T=4 and consist of 240 copies of capsid protein, though a fraction forms smaller T=3 particles consisting of 180 capsid proteins. Entering capsids are transported along microtubules to the nucleus. Phosphorylation of the capsid is thought to induce exposure of nuclear localization signal in the C-terminal portion of the capsid protein that allows binding to the nuclear pore complex via the importin (karyopherin-) alpha and beta. Capsids are imported in intact form through the nuclear pore into the nuclear basket, where it probably binds NUP153. Only capsids that contain the mature viral genome can release the viral DNA and capsid protein into the nucleoplasm. Immature capsids get stuck in the basket. Capsids encapsulate the pre-genomic RNA and the P protein. Pre-genomic RNA is reverse-transcribed into DNA while the capsid is still in the cytoplasm. The capsid can then either be directed to the nucleus, providing more genomes for transcription, or bud through the endoplasmic reticulum to provide new virions. In Hepatitis B virus genotype C subtype ar (isolate Japan/S-207/1988) (HBV-C), this protein is Capsid protein.